A 126-amino-acid polypeptide reads, in one-letter code: Methylglyoxal synthase (126 aa).

In terms of domain architecture, MGS-like spans 1-126 (MADRKCLALI…AEQLIDFRRN (126 aa)). Residues H12, K16, 38–41 (TGTT), and 59–60 (SG) contribute to the substrate site. D65 functions as the Proton donor/acceptor in the catalytic mechanism. H92 contributes to the substrate binding site.

This sequence belongs to the methylglyoxal synthase family.

It catalyses the reaction dihydroxyacetone phosphate = methylglyoxal + phosphate. In terms of biological role, catalyzes the formation of methylglyoxal from dihydroxyacetone phosphate. This chain is Methylglyoxal synthase, found in Rhizobium meliloti (strain 1021) (Ensifer meliloti).